The primary structure comprises 437 residues: Testis-specific Y-encoded-like protein 1 (437 aa).

Residues 1-81 (MSGLDGVKRT…QDAAGRGGTP (81 aa)) are disordered. Residues 11–26 (TPLQTHSIIISDQVPS) show a composition bias toward polar residues. Residues 28 to 40 (QDAHQYLRLRDQS) show a composition bias toward basic and acidic residues. A Glycyl lysine isopeptide (Lys-Gly) (interchain with G-Cter in SUMO2) cross-link involves residue Lys156.

The protein belongs to the nucleosome assembly protein (NAP) family. Ubiquitinated by the CRL2(APPBP2) complex, which recognizes the Arg-Xaa-Xaa-Gly sequence at the C-terminus, leading to its degradation. In terms of tissue distribution, expressed in testis, ovary, liver, spleen, brain, kidney, prostate, lung, liver, and heart.

The protein localises to the nucleus. The protein resides in the nucleolus. This is Testis-specific Y-encoded-like protein 1 (TSPYL1) from Homo sapiens (Human).